Reading from the N-terminus, the 233-residue chain is C-type lectin domain family 2 member D2 (233 aa).

A disordered region spans residues 1 to 34 (MPSSAHLQDAPPLLSRTLTQDEEQTSLRQSSSCG). The Cytoplasmic segment spans residues 1 to 76 (MPSSAHLQDA…SPESPAKLPC (76 aa)). Residues 77-97 (CYGVIMVLSVAVVALSVALSV) form a helical; Signal-anchor for type II membrane protein membrane-spanning segment. At 98–233 (KKTPQILTVK…KPNSYTSQCQ (136 aa)) the chain is on the extracellular side. The region spanning 119–228 (VGNKCYYFNE…KSICSKPNSY (110 aa)) is the C-type lectin domain. A glycan (N-linked (GlcNAc...) asparagine) is linked at Asn-132.

The protein resides in the cell membrane. Its function is as follows. Lectin-type cell surface receptor. This chain is C-type lectin domain family 2 member D2 (Clec2d2), found in Rattus norvegicus (Rat).